A 430-amino-acid polypeptide reads, in one-letter code: Trigger factor (430 aa).

Residues 157 to 242 (GDLVALETWS…AVEVSEPVLP (86 aa)) enclose the PPIase FKBP-type domain.

It belongs to the FKBP-type PPIase family. Tig subfamily.

Its subcellular location is the cytoplasm. It catalyses the reaction [protein]-peptidylproline (omega=180) = [protein]-peptidylproline (omega=0). In terms of biological role, involved in protein export. Acts as a chaperone by maintaining the newly synthesized protein in an open conformation. Functions as a peptidyl-prolyl cis-trans isomerase. The sequence is that of Trigger factor from Xanthomonas axonopodis pv. citri (strain 306).